The following is a 1067-amino-acid chain: MPPPPHIKPENVLKRAQELIAVGQAPAALNVLHEHVTSKRTRSSPIASLEPVMLLFVELCVDLRKGKAAKDGLYQYKNIAQNTNVGTIEVVLKKFIELAEKKVTEAQAKADEIQSSLESAAPSSNVEDLEAIETPETILLATVSGEQSRDRTDRAVVTPWLKFLWETYRTVLEILKNNARLEVMYQTTALQAFQFCLKYTRKTEFRRLCELLRNHVQNAAKYSAQMHAINLSDPDTLQRHLDTRFQQLNVAVELELWQEAFRSIEDIHTLLSLSKRPAKNVMMANYYEKLARIFLVSENYLFHAAAWNRYYNLLRQSAVALAAGQGTKKENPSVTEADMTKAASFVLLSALSIPVISTSRSRGALVDVDEARKNKNTRLTNLLGMAQPPSRAVLFRDALNKGLLKRARPEIRDLYNILEVDFHPLSICKKITPILKQIGADPEMEKYVLPLQQVILTRLFQQLSQVYESVELKFVYELAQFPDPFQITPAMIEKFIMNGCKKGDLAIRVDHTSGVLTFDTDIFSSAKALHSGSAAGSAESDVGSVQRLQNTPAEIARLQLTRLAKTLHVTCMYVDPSYNEARIQAKKAAQARAEAGAAKEHEETLARRVLIEKKKEAATDALQRKQREEETRKRIRTQQLQEAEKQRLLDEQREREKKRLKDEQDRIRQQELKKQLEELKSGVKGIDISEIDLEDMDANRLRAIKLAQLEKEKNELNERIRTTAKRIDHLERAFRREELKHIPEDYEAQKKRDMELYEAIKAETLKEAEEKHKEAVALKHRLSRLVPVFSSFRKEVSEKRHEEFEKRRKAAEREFEAKKKQRVKEVQERRRREKAEREAEERRRKEEEERAKREEEERIAKEEERRRVLAEEKAKREEERKRLDEIALRQKQREEEAEARRAARKSGLAEPPTRAAEPERPAERTAPRLNLASRTGGAPSWRERQAAKEATGAAPAPAPVPAPAAAPAAAPAPAAEAPKEEVQLPRRTGGYVPPHLRSGASASPAAPPSNGPAPEKYVPRHMRESSSSQPPSRTQTPPAPAAAASSDKPEGSPAPQKWVPRWKQQQQ.

Positions 92–121 (LKKFIELAEKKVTEAQAKADEIQSSLESAA) form a coiled coil. One can recognise a PCI domain in the interval 339–523 (MTKAASFVLL…GVLTFDTDIF (185 aa)). A coiled-coil region spans residues 608-899 (RVLIEKKKEA…QKQREEEAEA (292 aa)). Basic and acidic residues-rich tracts occupy residues 617–632 (AATD…EETR), 642–665 (EAEK…DEQD), 795–901 (EVSE…EARR), and 916–926 (AEPERPAERTA). Disordered stretches follow at residues 617-665 (AATD…DEQD) and 795-1067 (EVSE…QQQQ). Low complexity-rich tracts occupy residues 965–976 (AAPAAAPAPAAE) and 1025–1046 (SSSS…AASS).

This sequence belongs to the eIF-3 subunit A family. Component of the eukaryotic translation initiation factor 3 (eIF-3) complex.

Its subcellular location is the cytoplasm. Functionally, RNA-binding component of the eukaryotic translation initiation factor 3 (eIF-3) complex, which is involved in protein synthesis of a specialized repertoire of mRNAs and, together with other initiation factors, stimulates binding of mRNA and methionyl-tRNAi to the 40S ribosome. The eIF-3 complex specifically targets and initiates translation of a subset of mRNAs involved in cell proliferation. The protein is Eukaryotic translation initiation factor 3 subunit A (tif32) of Neosartorya fischeri (strain ATCC 1020 / DSM 3700 / CBS 544.65 / FGSC A1164 / JCM 1740 / NRRL 181 / WB 181) (Aspergillus fischerianus).